A 137-amino-acid polypeptide reads, in one-letter code: uncharacterized protein (137 aa).

Positions M1–Q32 are disordered.

To M.tuberculosis Rv3412.

This is an uncharacterized protein from Mycobacterium leprae (strain TN).